The following is a 975-amino-acid chain: Protein cramped (975 aa).

Disordered regions lie at residues 1–37 (MEEL…GGGA), 71–111 (QKMK…GSGK), 318–346 (AIFP…PSVA), 403–450 (PVAA…LMKM), and 809–844 (PIDR…QEPG). Positions 7–20 (QPPPPPPLPPPPSS) are enriched in pro residues. Basic and acidic residues predominate over residues 86 to 98 (SEREPNKKEEKAA). Positions 100 to 111 (KTPSQLKTGSGK) are enriched in polar residues. An SANT domain is found at 109 to 173 (SGKTTWTNVE…HYYQTYHKIC (65 aa)). Basic and acidic residues predominate over residues 410–425 (LRTESGSEKRSPETKK). Residues 815-833 (GTSSGGISSSGSKPDSSMG) are compositionally biased toward low complexity.

The protein belongs to the cramped family.

The protein resides in the nucleus. Polycomb group (Pc-G) genes are needed to maintain expression patterns of the homeotic selector genes of the Antennapedia (Antp-C) and Bithorax (Bx-C) complexes, and hence for the maintenance of segmental determination. Can act as a modifier of position effect variegation (PEV). The sequence is that of Protein cramped (crm) from Drosophila sechellia (Fruit fly).